We begin with the raw amino-acid sequence, 579 residues long: ATP-dependent lipid A-core flippase (579 aa).

5 helical membrane passes run 24-44 (FALS…LPAL), 63-83 (WVPL…FIST), 150-170 (VLGL…IVFA), 251-271 (VIQF…AGQA), and 275-295 (TTTV…FAPL). Residues 25–307 (ALSIVGLILT…LTAVNDQLQR (283 aa)) enclose the ABC transmembrane type-1 domain. The 237-residue stretch at 339–575 (LAFRDVGLTY…QGRYAQLHAL (237 aa)) folds into the ABC transporter domain. An ATP-binding site is contributed by 373-380 (GASGSGKT).

This sequence belongs to the ABC transporter superfamily. Lipid exporter (TC 3.A.1.106) family. As to quaternary structure, homodimer.

It localises to the cell inner membrane. It carries out the reaction ATP + H2O + lipid A-core oligosaccharideSide 1 = ADP + phosphate + lipid A-core oligosaccharideSide 2.. Functionally, involved in lipopolysaccharide (LPS) biosynthesis. Translocates lipid A-core from the inner to the outer leaflet of the inner membrane. Transmembrane domains (TMD) form a pore in the inner membrane and the ATP-binding domain (NBD) is responsible for energy generation. This chain is ATP-dependent lipid A-core flippase, found in Thiobacillus denitrificans (strain ATCC 25259 / T1).